The chain runs to 270 residues: Undecaprenyl-diphosphatase 1 (270 aa).

6 helical membrane passes run 79–99 (NLLL…LLFS), 105–125 (VLFN…IILW), 155–175 (LALI…LFLG), 182–202 (TEFS…YSLI), 215–235 (VFAV…RALL), and 242–262 (SFAV…GTWW).

This sequence belongs to the UppP family.

The protein localises to the cell inner membrane. The catalysed reaction is di-trans,octa-cis-undecaprenyl diphosphate + H2O = di-trans,octa-cis-undecaprenyl phosphate + phosphate + H(+). In terms of biological role, catalyzes the dephosphorylation of undecaprenyl diphosphate (UPP). Confers resistance to bacitracin. This is Undecaprenyl-diphosphatase 1 from Chromobacterium violaceum (strain ATCC 12472 / DSM 30191 / JCM 1249 / CCUG 213 / NBRC 12614 / NCIMB 9131 / NCTC 9757 / MK).